We begin with the raw amino-acid sequence, 521 residues long: Lysine--tRNA ligase (521 aa).

The 'HIGH' region motif lies at 32–40; it reads PSGTVHIGN. Positions 280 to 284 match the 'KMSKS' region motif; the sequence is KISSS.

It belongs to the class-I aminoacyl-tRNA synthetase family.

Its subcellular location is the cytoplasm. It catalyses the reaction tRNA(Lys) + L-lysine + ATP = L-lysyl-tRNA(Lys) + AMP + diphosphate. This chain is Lysine--tRNA ligase, found in Borrelia garinii subsp. bavariensis (strain ATCC BAA-2496 / DSM 23469 / PBi) (Borreliella bavariensis).